The following is a 247-amino-acid chain: C-type lectin domain family 7 member A (247 aa).

At 1 to 44 (MEYHPDLENLDEDGYTQLHFDSRSNTRIAVVSEKGSCVASPPWR) the chain is on the cytoplasmic side. The ITAM-like motif lies at 15–18 (YTQL). Residues 45 to 65 (LIAVILGILCLVILVIAVVLG) form a helical; Signal-anchor for type II membrane protein membrane-spanning segment. Residues 66–247 (TMAIWRPNSG…CSICEKKFSM (182 aa)) lie on the Extracellular side of the membrane. Residues 81-105 (NGYFPSRNKENHSQPTQSPLEESVT) are disordered. N91 carries an N-linked (GlcNAc...) asparagine glycan. Residues 93–105 (SQPTQSPLEESVT) are compositionally biased toward polar residues. 3 cysteine pairs are disulfide-bonded: C120–C131, C148–C241, and C220–C233. Residues 127–242 (YEKSCYLFSP…CSVPSCSICE (116 aa)) form the C-type lectin domain. 146-153 (RQCSQLGS) is a (1,3-beta-D-glucosyl)n binding site. 3 residues coordinate a divalent metal cation: K157, D159, and E163. Residue E195 coordinates (1,3-beta-D-glucosyl)n. E242 lines the a divalent metal cation pocket.

Homodimer. Interacts with SYK; participates in leukocyte activation in presence of fungal pathogens. Interacts with CD37; this interaction controls CLEC7A-mediated IL-6 production. Post-translationally, phosphorylated on tyrosine residues in response to beta-glucan binding. In terms of tissue distribution, detected in dendritic cells, in paracortical and medullary regions of lymph nodes, and in spleen red pulp and white pulp.

It localises to the cell membrane. In terms of biological role, lectin that functions as a pattern recognizing receptor (PRR) specific for beta-1,3-linked and beta-1,6-linked glucans, which constitute cell wall constituents from pathogenic bacteria and fungi. Necessary for the TLR2-mediated inflammatory response and activation of NF-kappa-B: upon beta-glucan binding, recruits SYK via its ITAM motif and promotes a signaling cascade that activates some CARD domain-BCL10-MALT1 (CBM) signalosomes, leading to the activation of NF-kappa-B and MAP kinase p38 (MAPK11, MAPK12, MAPK13 and/or MAPK14) pathways which stimulate expression of genes encoding pro-inflammatory cytokines and chemokines. Enhances cytokine production in macrophages and dendritic cells. Mediates production of reactive oxygen species in the cell. Mediates phagocytosis of C.albicans conidia. Binds T-cells in a way that does not involve their surface glycans and plays a role in T-cell activation. Stimulates T-cell proliferation. Induces phosphorylation of SCIMP after binding beta-glucans. The polypeptide is C-type lectin domain family 7 member A (CLEC7A) (Macaca mulatta (Rhesus macaque)).